Reading from the N-terminus, the 194-residue chain is Small ribosomal subunit protein eS7 (194 aa).

This sequence belongs to the eukaryotic ribosomal protein eS7 family.

The chain is Small ribosomal subunit protein eS7 (RpS7) from Drosophila yakuba (Fruit fly).